The following is a 195-amino-acid chain: ATP-dependent Clp protease proteolytic subunit (195 aa).

The active-site Nucleophile is the Ser98. Residue His123 is part of the active site.

It belongs to the peptidase S14 family. In terms of assembly, fourteen ClpP subunits assemble into 2 heptameric rings which stack back to back to give a disk-like structure with a central cavity, resembling the structure of eukaryotic proteasomes.

The protein resides in the cytoplasm. It catalyses the reaction Hydrolysis of proteins to small peptides in the presence of ATP and magnesium. alpha-casein is the usual test substrate. In the absence of ATP, only oligopeptides shorter than five residues are hydrolyzed (such as succinyl-Leu-Tyr-|-NHMec, and Leu-Tyr-Leu-|-Tyr-Trp, in which cleavage of the -Tyr-|-Leu- and -Tyr-|-Trp bonds also occurs).. Functionally, cleaves peptides in various proteins in a process that requires ATP hydrolysis. Has a chymotrypsin-like activity. Plays a major role in the degradation of misfolded proteins. The sequence is that of ATP-dependent Clp protease proteolytic subunit from Caldanaerobacter subterraneus subsp. tengcongensis (strain DSM 15242 / JCM 11007 / NBRC 100824 / MB4) (Thermoanaerobacter tengcongensis).